Here is a 385-residue protein sequence, read N- to C-terminus: ELAV-like protein 4 (385 aa).

Residues 12-48 (TMEPQVSNGPTSNTSNGPSSNNRNCPSPMQTGAATDD) form a disordered region. Over residues 18–33 (SNGPTSNTSNGPSSNN) the composition is skewed to low complexity. Positions 34-44 (RNCPSPMQTGA) are enriched in polar residues. Phosphoserine is present on Ser38. RRM domains lie at 51 to 129 (TNLI…YARP) and 137 to 217 (ANLY…FANN). Ser233 carries the post-translational modification Phosphoserine. Residue Arg248 is modified to Asymmetric dimethylarginine; by CARM1; alternate. Arg248 is subject to Omega-N-methylarginine; by CARM1; alternate. Residues 302 to 380 (WCIFVYNLSP…RVLQVSFKTN (79 aa)) enclose the RRM 3 domain.

This sequence belongs to the RRM elav family. Component of a TAU mRNP complex, at least composed of IGF2BP1, ELAVL4 and G3BP. Associates with the EIF4F cap-binding complex, composed of EIF4G, EIF4A, EIF4E and PABP. Within the EIF4F cap-binding complex, interacts with EIF4A. Interacts with SMN (via Tudor domain) in an RNA-independent manner; the interaction is required for localization of ELAVL4 to RNA granules. Interacts with MAP1 light chain LC1 (via C-terminus); the interaction contributes to the association of ELAVL4 with microtubules. Interacts with MAP1 light chain LC2. Post-translationally, methylated by CARM1, which leads to reduced RNA-binding activity and enhanced interaction with SMN. Methylation at Arg-248 by CARM1 weakens protective binding to the 3'UTR of CDKN1A mRNA and down-regulates CDKN1A protein expression, thereby maintaining cells in a proliferative state. Methylation is inhibited by NGF, which facilitates neurite outgrowth. As to expression, expressed in the brain, including the hippocampus, and in pancreatic beta cells (at protein level). Expressed in pyramidal neurons of the hippocampal CA3 and CA1 region and in the hilus but not in dentate granule cells (at protein level). Expressed in the dorsal root ganglion and the spinal cord (at protein level). Expressed in neural stem and progenitor cells (at protein level). Expressed in radial glia-like cells and in transient amplifying cells in the subventricular zone (SVZ), and in immature neurons both in the SVZ and the rostral migratory stream as well as in mature neurons in the olfactory bulb (at protein level). Expressed in testis and in the brain, including the hippocampus, the neocortex and the cerebellum. Expressed in lower- but not upper-layer primary neurons of the mature neocortex, in the hippocampal regions CA1-3 and the dentate gyrus. Expressed in the mitral and granule cells of the olfactory bulb, cerebral cortex, entorhinal cortex, thalamus, medial habenula, amygdala, granule cells of the cerebellum, pons, olivary nucleus, dorsal and ventral spinal cord and in dorsal root ganglia. Expressed in motor neurons. Isoform 4: Expressed in the brain. Isoform 5: Expressed in the brain. Isoform 6: Expressed in the brain. Isoform 7: Expressed in the brain. Isoform 8: Expressed in the brain. Isoform 9: Expressed in the brain. Isoform 10: Expressed in the brain. Isoform 11: Expressed in the brain.

It localises to the cytoplasm. Its subcellular location is the perikaryon. It is found in the cell projection. The protein localises to the dendrite. The protein resides in the axon. It localises to the growth cone. In terms of biological role, RNA-binding protein that is involved in the post-transcriptional regulation of mRNAs. Plays a role in the regulation of mRNA stability, alternative splicing and translation. Binds to AU-rich element (ARE) sequences in the 3' untranslated region (3'UTR) of target mRNAs, including GAP43, VEGF, FOS, CDKN1A and ACHE mRNA. Many of the target mRNAs are coding for RNA-binding proteins, transcription factors and proteins involved in RNA processing and/or neuronal development and function. By binding to the mRNA 3'UTR, decreases mRNA deadenylation and thereby contributes to the stabilization of mRNA molecules and their protection from decay. Also binds to the polyadenylated (poly(A)) tail in the 3'UTR of mRNA, thereby increasing its affinity for mRNA binding. Mainly plays a role in neuron-specific RNA processing by stabilization of mRNAs such as GAP43, ACHE and mRNAs of other neuronal proteins, thereby contributing to the differentiation of neural progenitor cells, nervous system development, learning and memory mechanisms. Involved in the negative regulation of the proliferative activity of neuronal stem cells and in the positive regulation of neuronal differentiation of neural progenitor cells. Promotes neuronal differentiation of neural stem/progenitor cells in the adult subventricular zone of the hippocampus by binding to and stabilizing SATB1 mRNA. Binds and stabilizes MSI1 mRNA in neural stem cells. Exhibits increased binding to ACHE mRNA during neuronal differentiation, thereby stabilizing ACHE mRNA and enhancing its expression. Protects CDKN1A mRNA from decay by binding to its 3'-UTR. May bind to APP and BACE1 mRNAS and the BACE1AS lncRNA and enhance their stabilization. Plays a role in neurite outgrowth and in the establishment and maturation of dendritic arbors, thereby contributing to neocortical and hippocampal circuitry function. Stabilizes GAP43 mRNA and protects it from decay during postembryonic development in the brain. By promoting the stabilization of GAP43 mRNA, plays a role in NGF-mediated neurite outgrowth. Binds to BDNF long 3'UTR mRNA, thereby leading to its stabilization and increased dendritic translation after activation of PKC. By increasing translation of BDNF after nerve injury, may contribute to nerve regeneration. Acts as a stabilizing factor by binding to the 3'UTR of NOVA1 mRNA, thereby increasing its translation and enhancing its functional activity in neuron-specific splicing. Stimulates translation of mRNA in a poly(A)- and cap-dependent manner, possibly by associating with the EIF4F cap-binding complex. May also negatively regulate translation by binding to the 5'UTR of Ins2 mRNA, thereby repressing its translation. Upon glucose stimulation, Ins2 mRNA is released from ELAVL4 and translational inhibition is abolished. Also plays a role in the regulation of alternative splicing. May regulate alternative splicing of CALCA pre-mRNA into Calcitonin and Calcitonin gene-related peptide 1 (CGRP) by competing with splicing regulator TIAR for binding to U-rich sequences of CALCA pre-mRNA. This is ELAV-like protein 4 (Elavl4) from Mus musculus (Mouse).